Consider the following 495-residue polypeptide: ATP-dependent RNA helicase dbp3 (495 aa).

A compositionally biased stretch (basic and acidic residues) spans 1 to 14 (MAKRELQDKGSTEH). The disordered stretch occupies residues 1-49 (MAKRELQDKGSTEHRAKKKSRNEKHTKKAEDSQASAQSSETQYTDPKEP). Basic residues predominate over residues 15–27 (RAKKKSRNEKHTK). Residues 97–105 (SFTSPTAIQ) carry the Q motif motif. The region spanning 109–284 (WPFLFSGRDV…ATFMTSPVTV (176 aa)) is the Helicase ATP-binding domain. 122–129 (AETGSGKT) contacts ATP. A DEAD box motif is present at residues 231–234 (DEAD). A Helicase C-terminal domain is found at 315-464 (RLVQLLNKYQ…DVPEDLLKFG (150 aa)).

It belongs to the DEAD box helicase family. DDX5/DBP2 subfamily.

It localises to the nucleus. Its subcellular location is the nucleolus. The catalysed reaction is ATP + H2O = ADP + phosphate + H(+). Its function is as follows. ATP-dependent RNA helicase required for 60S ribosomal subunit synthesis. Involved in efficient pre-rRNA processing, predominantly at site A3, which is necessary for the normal formation of 25S and 5.8S rRNAs. This Aspergillus niger (strain ATCC MYA-4892 / CBS 513.88 / FGSC A1513) protein is ATP-dependent RNA helicase dbp3 (dbp3).